Consider the following 326-residue polypeptide: tRNA-modifying protein YgfZ (326 aa).

Trp27 and Trp189 together coordinate folate.

It belongs to the tRNA-modifying YgfZ family.

It is found in the cytoplasm. Folate-binding protein involved in regulating the level of ATP-DnaA and in the modification of some tRNAs. It is probably a key factor in regulatory networks that act via tRNA modification, such as initiation of chromosomal replication. The sequence is that of tRNA-modifying protein YgfZ from Escherichia coli O6:K15:H31 (strain 536 / UPEC).